Consider the following 95-residue polypeptide: Small ribosomal subunit protein bS21 (95 aa).

Positions arginine 55–arginine 95 are disordered. The span at alanine 78–alanine 89 shows a compositional bias: gly residues.

This sequence belongs to the bacterial ribosomal protein bS21 family.

This chain is Small ribosomal subunit protein bS21, found in Nitrobacter hamburgensis (strain DSM 10229 / NCIMB 13809 / X14).